A 319-amino-acid polypeptide reads, in one-letter code: Acetyl-coenzyme A carboxylase carboxyl transferase subunit alpha (319 aa).

The CoA carboxyltransferase C-terminal domain occupies 32-293; that stretch reads NVETEVRALR…KAVLLNELDA (262 aa).

It belongs to the AccA family. Acetyl-CoA carboxylase is a heterohexamer composed of biotin carboxyl carrier protein (AccB), biotin carboxylase (AccC) and two subunits each of ACCase subunit alpha (AccA) and ACCase subunit beta (AccD).

It localises to the cytoplasm. The enzyme catalyses N(6)-carboxybiotinyl-L-lysyl-[protein] + acetyl-CoA = N(6)-biotinyl-L-lysyl-[protein] + malonyl-CoA. It functions in the pathway lipid metabolism; malonyl-CoA biosynthesis; malonyl-CoA from acetyl-CoA: step 1/1. Component of the acetyl coenzyme A carboxylase (ACC) complex. First, biotin carboxylase catalyzes the carboxylation of biotin on its carrier protein (BCCP) and then the CO(2) group is transferred by the carboxyltransferase to acetyl-CoA to form malonyl-CoA. In Xanthomonas axonopodis pv. citri (strain 306), this protein is Acetyl-coenzyme A carboxylase carboxyl transferase subunit alpha.